A 380-amino-acid chain; its full sequence is Flap endonuclease 1 (380 aa).

The interval 1–104 is N-domain; it reads MGIQGLAKLI…GELAKRSERR (104 aa). Symmetric dimethylarginine; by PRMT5 is present on arginine 19. Aspartate 34 contacts Mg(2+). DNA-binding residues include arginine 47 and arginine 70. Lysine 80 is subject to N6-acetyllysine. Aspartate 86 provides a ligand contact to Mg(2+). A symmetric dimethylarginine; by PRMT5 mark is found at arginine 100 and arginine 104. Positions 122–253 are I-domain; that stretch reads EVEKFTKRLV…KRAVDLIQKH (132 aa). Mg(2+)-binding residues include glutamate 158, glutamate 160, aspartate 179, and aspartate 181. Glutamate 158 is a binding site for DNA. The residue at position 187 (serine 187) is a Phosphoserine; by CDK2. The residue at position 192 (arginine 192) is a Symmetric dimethylarginine; by PRMT5. A Phosphoserine modification is found at serine 197. DNA-binding residues include glycine 231 and aspartate 233. Aspartate 233 contributes to the Mg(2+) binding site. A phosphoserine mark is found at serine 255, serine 293, and serine 335. At threonine 336 the chain carries Phosphothreonine. The interaction with PCNA stretch occupies residues 336-344; it reads TQGRLDDFF. The tract at residues 349–380 is disordered; it reads SLSSAKRKEPEPKGAAKKKQRLGPAGKFKRGK. Residues lysine 354, lysine 375, lysine 377, and lysine 380 each carry the N6-acetyllysine modification. The span at 363 to 380 shows a compositional bias: basic residues; it reads AAKKKQRLGPAGKFKRGK.

This sequence belongs to the XPG/RAD2 endonuclease family. FEN1 subfamily. Interacts with PCNA. Three molecules of FEN1 bind to one PCNA trimer with each molecule binding to one PCNA monomer. PCNA stimulates the nuclease activity without altering cleavage specificity. The C-terminal domain binds EP300; can bind simultaneously to both PCNA and EP300. Interacts with DDX11; this interaction is direct and increases flap endonuclease activity of FEN1. Interacts with WDR4; regulating its endonuclease activity. Interacts with POLB. Mg(2+) serves as cofactor. Post-translationally, acetylated by EP300. Acetylation inhibits both endonuclease and exonuclease activity. Acetylation also reduces DNA-binding activity but does not affect interaction with PCNA or EP300. Phosphorylation upon DNA damage induces relocalization to the nuclear plasma. Phosphorylation at Ser-187 by CDK2 occurs during late S-phase and results in dissociation from PCNA. In terms of processing, methylation at Arg-192 by PRMT5 impedes Ser-187 phosphorylation and increases interaction with PCNA.

The protein localises to the nucleus. It localises to the nucleolus. Its subcellular location is the nucleoplasm. It is found in the mitochondrion. In terms of biological role, structure-specific nuclease with 5'-flap endonuclease and 5'-3' exonuclease activities involved in DNA replication and repair. During DNA replication, cleaves the 5'-overhanging flap structure that is generated by displacement synthesis when DNA polymerase encounters the 5'-end of a downstream Okazaki fragment. It enters the flap from the 5'-end and then tracks to cleave the flap base, leaving a nick for ligation. Also involved in the long patch base excision repair (LP-BER) pathway, by cleaving within the apurinic/apyrimidinic (AP) site-terminated flap. Acts as a genome stabilization factor that prevents flaps from equilibrating into structures that lead to duplications and deletions. Also possesses 5'-3' exonuclease activity on nicked or gapped double-stranded DNA, and exhibits RNase H activity. Also involved in replication and repair of rDNA and in repairing mitochondrial DNA. The protein is Flap endonuclease 1 of Ovis aries (Sheep).